The following is a 39-amino-acid chain: Protein YkiC (39 aa).

The helical transmembrane segment at 13-35 (LLSAKLCNCTQAIMTHIIASFLA) threads the bilayer.

It localises to the cell inner membrane. The protein is Protein YkiC of Escherichia coli (strain K12).